Here is a 536-residue protein sequence, read N- to C-terminus: DNA damage-binding protein CMR1 (536 aa).

Residues 36–45 (REAGVDDTHR) show a composition bias toward basic and acidic residues. The tract at residues 36–72 (REAGVDDTHRTVVKKKKSPSVSRGRSASPKVAPVATR) is disordered. WD repeat units follow at residues 195-236 (LVYE…LSEN), 251-291 (FFTK…SNDI), 346-386 (LSDK…KKPE), 403-442 (DSRL…LPDD), 456-495 (GRWT…LAHL), and 496-535 (PTAT…KEEE).

It belongs to the WD repeat DDB2/WDR76 family.

DNA-binding protein that binds to both single- and double-stranded DNA. Binds preferentially to UV-damaged DNA. May be involved in DNA-metabolic processes. The chain is DNA damage-binding protein CMR1 from Vanderwaltozyma polyspora (strain ATCC 22028 / DSM 70294 / BCRC 21397 / CBS 2163 / NBRC 10782 / NRRL Y-8283 / UCD 57-17) (Kluyveromyces polysporus).